A 119-amino-acid chain; its full sequence is Holo-[acyl-carrier-protein] synthase (119 aa).

Residues Asp-7 and Glu-53 each contribute to the Mg(2+) site.

Belongs to the P-Pant transferase superfamily. AcpS family. Mg(2+) serves as cofactor.

The protein resides in the cytoplasm. The catalysed reaction is apo-[ACP] + CoA = holo-[ACP] + adenosine 3',5'-bisphosphate + H(+). In terms of biological role, transfers the 4'-phosphopantetheine moiety from coenzyme A to a Ser of acyl-carrier-protein. This chain is Holo-[acyl-carrier-protein] synthase, found in Dehalococcoides mccartyi (strain ATCC BAA-2266 / KCTC 15142 / 195) (Dehalococcoides ethenogenes (strain 195)).